Consider the following 169-residue polypeptide: Chorismate pyruvate-lyase (169 aa).

Residues M35, R77, L115, and E156 each coordinate substrate.

The protein belongs to the UbiC family. In terms of assembly, monomer.

The protein resides in the cytoplasm. The enzyme catalyses chorismate = 4-hydroxybenzoate + pyruvate. It functions in the pathway cofactor biosynthesis; ubiquinone biosynthesis. Removes the pyruvyl group from chorismate, with concomitant aromatization of the ring, to provide 4-hydroxybenzoate (4HB) for the ubiquinone pathway. The sequence is that of Chorismate pyruvate-lyase from Cronobacter sakazakii (strain ATCC BAA-894) (Enterobacter sakazakii).